Consider the following 302-residue polypeptide: tRNA dimethylallyltransferase (302 aa).

9 to 16 lines the ATP pocket; that stretch reads GATATGKS. 11–16 serves as a coordination point for substrate; it reads TATGKS. Residues 34–37 form an interaction with substrate tRNA region; the sequence is DSRQ.

This sequence belongs to the IPP transferase family. In terms of assembly, monomer. It depends on Mg(2+) as a cofactor.

The enzyme catalyses adenosine(37) in tRNA + dimethylallyl diphosphate = N(6)-dimethylallyladenosine(37) in tRNA + diphosphate. Catalyzes the transfer of a dimethylallyl group onto the adenine at position 37 in tRNAs that read codons beginning with uridine, leading to the formation of N6-(dimethylallyl)adenosine (i(6)A). The polypeptide is tRNA dimethylallyltransferase (Nostoc punctiforme (strain ATCC 29133 / PCC 73102)).